A 116-amino-acid polypeptide reads, in one-letter code: uncharacterized protein (116 aa).

An N-terminal signal peptide occupies residues 1 to 15 (MKKYFLILASFMLVA).

This is an uncharacterized protein from Haemophilus influenzae (strain ATCC 51907 / DSM 11121 / KW20 / Rd).